The following is a 174-amino-acid chain: Methylamine utilization protein MauL (174 aa).

Its pathway is one-carbon metabolism; methylamine degradation. Its function is as follows. Probably involved in TTQ prosthetic group biosynthesis. The protein is Methylamine utilization protein MauL (mauL) of Methylophilus methylotrophus (Bacterium W3A1).